The following is a 300-amino-acid chain: FeMo cofactor biosynthesis protein NifB (300 aa).

The Radical SAM core domain occupies 24-266 (HDKVGRVHLP…PQFRACGQCR (243 aa)). Positions 38, 42, and 45 each coordinate [4Fe-4S] cluster. 3 residues coordinate S-adenosyl-L-methionine: Gly-93, Thr-144, and Ile-196. Cys-262 and Cys-265 together coordinate [4Fe-4S] cluster.

Belongs to the radical SAM superfamily. NifB family. As to quaternary structure, monomer. It depends on [4Fe-4S] cluster as a cofactor.

Its pathway is cofactor biosynthesis; Fe-Mo cofactor biosynthesis. In terms of biological role, involved in the biosynthesis of the iron-molybdenum cofactor (FeMo-co or M-cluster) found in the dinitrogenase enzyme of the nitrogenase complex in nitrogen-fixing microorganisms. NifB catalyzes the crucial step of radical SAM-dependent carbide insertion that occurs concomitant with the insertion of a 9th sulfur and the rearrangement/coupling of two [4Fe-4S] clusters into a [8Fe-9S-C] cluster, the precursor to the M-cluster. This is FeMo cofactor biosynthesis protein NifB from Methanocaldococcus jannaschii (strain ATCC 43067 / DSM 2661 / JAL-1 / JCM 10045 / NBRC 100440) (Methanococcus jannaschii).